A 345-amino-acid chain; its full sequence is Succinylglutamate desuccinylase (345 aa).

Zn(2+)-binding residues include H64, E67, and H161. E225 is a catalytic residue.

The protein belongs to the AspA/AstE family. Succinylglutamate desuccinylase subfamily. Zn(2+) serves as cofactor.

The catalysed reaction is N-succinyl-L-glutamate + H2O = L-glutamate + succinate. Its pathway is amino-acid degradation; L-arginine degradation via AST pathway; L-glutamate and succinate from L-arginine: step 5/5. In terms of biological role, transforms N(2)-succinylglutamate into succinate and glutamate. In Shewanella piezotolerans (strain WP3 / JCM 13877), this protein is Succinylglutamate desuccinylase.